Here is a 337-residue protein sequence, read N- to C-terminus: Probable arabinose 5-phosphate isomerase (337 aa).

The region spanning 58–201 (VIDLILACEG…AVSLITARNF (144 aa)) is the SIS domain. Residues 92–93 (GT), H99, H105, 131–140 (KLIPSLKNFG), 165–167 (TVE), T237, and D290 each bind substrate. Residue H99 participates in Zn(2+) binding. The CBS 1 domain occupies 227 to 284 (MQTRLPTILPTTNFTDCLTVMNEGRMGVALVMENEQLKGIITDGDIRRALTANGAGTL). The CBS 2 domain maps to 292–337 (MTSSPKTIHQDEFLSKAEDFMKAKKIHSLVVVNDENHVVGLVEFSS).

The protein belongs to the SIS family. GutQ/KpsF subfamily.

The catalysed reaction is D-arabinose 5-phosphate = D-ribulose 5-phosphate. Its function is as follows. Catalyzes the reversible aldol-ketol isomerization between D-ribulose 5-phosphate (Ru5P) and D-arabinose 5-phosphate (A5P). This is Probable arabinose 5-phosphate isomerase from Haemophilus influenzae (strain ATCC 51907 / DSM 11121 / KW20 / Rd).